Reading from the N-terminus, the 310-residue chain is 17-beta-hydroxysteroid dehydrogenase type 3 (310 aa).

48-77 (GQWAVITGAGDGIGKAYSFELAKRGLNVVL) is an NADP(+) binding site. Residue Ser-185 coordinates substrate. Tyr-198 acts as the Proton acceptor in catalysis.

Belongs to the short-chain dehydrogenases/reductases (SDR) family. 17-beta-HSD 3 subfamily. As to expression, testis.

The protein localises to the endoplasmic reticulum. It catalyses the reaction a 17beta-hydroxy steroid + NADP(+) = a 17-oxo steroid + NADPH + H(+). The catalysed reaction is testosterone + NADP(+) = androst-4-ene-3,17-dione + NADPH + H(+). It carries out the reaction 17beta-estradiol + NADP(+) = estrone + NADPH + H(+). The enzyme catalyses 3beta-hydroxyandrost-5-en-17-one + NADPH + H(+) = androst-5-en-3beta,17beta-diol + NADP(+). It catalyses the reaction 17beta-hydroxy-5alpha-androstan-3-one + NADP(+) = 5alpha-androstan-3,17-dione + NADPH + H(+). The catalysed reaction is androsterone + NADPH + H(+) = 5alpha-androstane-3alpha,17beta-diol + NADP(+). It carries out the reaction 3beta-hydroxy-5alpha-androstan-17-one + NADPH + H(+) = 5alpha-androstane-3beta,17beta-diol + NADP(+). The enzyme catalyses androst-4-ene-3,11,17-trione + NADPH + H(+) = 17beta-hydroxyandrost-4-ene-3,11-dione + NADP(+). It catalyses the reaction 11beta-hydroxyandrost-4-ene-3,17-dione + NADPH + H(+) = 11beta,17beta-dihydroxyandrost-4-ene-3-one + NADP(+). It participates in hormone biosynthesis; testosterone biosynthesis. The protein operates within steroid metabolism. Functionally, catalyzes the conversion of 17-oxosteroids to 17beta-hydroxysteroids. Favors the reduction of androstenedione to testosterone. Testosterone is the key androgen driving male development and function. Uses NADPH while the two other EDH17B enzymes use NADH. Androgens such as epiandrosterone, dehydroepiandrosterone, androsterone and androstanedione are accepted as substrates and reduced at C-17. Can reduce 11-ketoandrostenedione as well as 11beta-hydroxyandrostenedione at C-17 to the respective testosterone forms. This Homo sapiens (Human) protein is 17-beta-hydroxysteroid dehydrogenase type 3.